The following is a 227-amino-acid chain: Cytochrome c oxidase subunit 2 (227 aa).

At 1–14 (MAYPFQLGLQDATS) the chain is on the mitochondrial intermembrane side. A helical transmembrane segment spans residues 15-45 (PIMEELMNFHDHTLMIVFLISSLVLYIISLM). The Mitochondrial matrix segment spans residues 46–59 (LTTKLTHTSTMDAQ). A helical membrane pass occupies residues 60-87 (EVETIWTILPAAILILIALPSLRILYMM). The Mitochondrial intermembrane segment spans residues 88–227 (DEINNPVLTV…YFENWSASMI (140 aa)). His161, Cys196, Glu198, Cys200, His204, and Met207 together coordinate Cu cation. Glu198 is a binding site for Mg(2+). At Tyr218 the chain carries Phosphotyrosine.

It belongs to the cytochrome c oxidase subunit 2 family. In terms of assembly, component of the cytochrome c oxidase (complex IV, CIV), a multisubunit enzyme composed of 14 subunits. The complex is composed of a catalytic core of 3 subunits MT-CO1, MT-CO2 and MT-CO3, encoded in the mitochondrial DNA, and 11 supernumerary subunits COX4I, COX5A, COX5B, COX6A, COX6B, COX6C, COX7A, COX7B, COX7C, COX8 and NDUFA4, which are encoded in the nuclear genome. The complex exists as a monomer or a dimer and forms supercomplexes (SCs) in the inner mitochondrial membrane with NADH-ubiquinone oxidoreductase (complex I, CI) and ubiquinol-cytochrome c oxidoreductase (cytochrome b-c1 complex, complex III, CIII), resulting in different assemblies (supercomplex SCI(1)III(2)IV(1) and megacomplex MCI(2)III(2)IV(2)). Found in a complex with TMEM177, COA6, COX18, COX20, SCO1 and SCO2. Interacts with TMEM177 in a COX20-dependent manner. Interacts with COX20. Interacts with COX16. The cofactor is Cu cation.

Its subcellular location is the mitochondrion inner membrane. It carries out the reaction 4 Fe(II)-[cytochrome c] + O2 + 8 H(+)(in) = 4 Fe(III)-[cytochrome c] + 2 H2O + 4 H(+)(out). Functionally, component of the cytochrome c oxidase, the last enzyme in the mitochondrial electron transport chain which drives oxidative phosphorylation. The respiratory chain contains 3 multisubunit complexes succinate dehydrogenase (complex II, CII), ubiquinol-cytochrome c oxidoreductase (cytochrome b-c1 complex, complex III, CIII) and cytochrome c oxidase (complex IV, CIV), that cooperate to transfer electrons derived from NADH and succinate to molecular oxygen, creating an electrochemical gradient over the inner membrane that drives transmembrane transport and the ATP synthase. Cytochrome c oxidase is the component of the respiratory chain that catalyzes the reduction of oxygen to water. Electrons originating from reduced cytochrome c in the intermembrane space (IMS) are transferred via the dinuclear copper A center (CU(A)) of subunit 2 and heme A of subunit 1 to the active site in subunit 1, a binuclear center (BNC) formed by heme A3 and copper B (CU(B)). The BNC reduces molecular oxygen to 2 water molecules using 4 electrons from cytochrome c in the IMS and 4 protons from the mitochondrial matrix. The protein is Cytochrome c oxidase subunit 2 (MT-CO2) of Praomys tullbergi (Tullberg's soft-furred rat).